A 722-amino-acid chain; its full sequence is MSKNFKRVGAVAVAAAMSLSIMATTSINAASSPANKVYQDRFESMYSKIKDPANGYFSEQGIPYHSIETLMVEAPDYGHVTTSEAMSYYMWLEAMHGRFSGDFTGFDKSWSVTEQYLIPTEKDQPNTSMSRYDANKPATYAPEFQDPSKYPSPLDTSQPVGRDPINSQLTSAYGTSMLYGMHWILDVDNWYGFGARADGTSKPSYINTFQRGEQESTWETIPQPCWDEHKFGGQYGFLDLFTKDTGTPAKQFKYTNAPDADARAVQATYWADQWAKEQGKSVSTSVGKATKMGDYLRYSFFDKYFRKIGQPSQAGTGYDAAHYLLSWYYAWGGGIDSTWSWIIGSSHNHFGYQNPFAAWVLSTDANFKPKSSNGASDWAKSLDRQLEFYQWLQSAEGAIAGGATNSWNGRYEAVPSGTSTFYGMGYVENPVYADPGSNTWFGMQVWSMQRVAELYYKTGDARAKKLLDKWAKWINGEIKFNADGTFQIPSTIDWEGQPDTWNPTQGYTGNANLHVKVVNYGTDLGCASSLANTLTYYAAKSGDETSRQNAQKLLDAMWNNYSDSKGISTVEQRGDYHRFLDQEVFVPAGWTGKMPNGDVIKSGVKFIDIRSKYKQDPEWQTMVAALQAGQVPTQRLHRFWAQSEFAVANGVYAILFPDQGPEKLLGDVNGDETVDAIDLAILKKYLLNSSTTINTANADMNSDNAIDAIDYALLKKALLSIQ.

The first 29 residues, 1–29 (MSKNFKRVGAVAVAAAMSLSIMATTSINA), serve as a signal peptide directing secretion. A disordered region spans residues 142 to 165 (PEFQDPSKYPSPLDTSQPVGRDPI). Positions 154 to 165 (LDTSQPVGRDPI) are enriched in polar residues. The 62-residue stretch at 661–722 (PEKLLGDVNG…LLKKALLSIQ (62 aa)) folds into the Dockerin domain.

Belongs to the glycosyl hydrolase 48 (cellulase L) family.

The catalysed reaction is Endohydrolysis of (1-&gt;4)-beta-D-glucosidic linkages in cellulose, lichenin and cereal beta-D-glucans.. Probable endoglucanase involved in the degradation of cellulose or related beta-glucans. The sequence is that of Endoglucanase F (celCCF) from Ruminiclostridium cellulolyticum (strain ATCC 35319 / DSM 5812 / JCM 6584 / H10) (Clostridium cellulolyticum).